The primary structure comprises 447 residues: Na(+)-translocating NADH-quinone reductase subunit A (447 aa).

The protein belongs to the NqrA family. In terms of assembly, composed of six subunits; NqrA, NqrB, NqrC, NqrD, NqrE and NqrF.

The catalysed reaction is a ubiquinone + n Na(+)(in) + NADH + H(+) = a ubiquinol + n Na(+)(out) + NAD(+). NQR complex catalyzes the reduction of ubiquinone-1 to ubiquinol by two successive reactions, coupled with the transport of Na(+) ions from the cytoplasm to the periplasm. NqrA to NqrE are probably involved in the second step, the conversion of ubisemiquinone to ubiquinol. The sequence is that of Na(+)-translocating NADH-quinone reductase subunit A from Yersinia pseudotuberculosis serotype O:1b (strain IP 31758).